The primary structure comprises 215 residues: Large ribosomal subunit protein uL4 (215 aa).

The disordered stretch occupies residues 43–100 (AAKRQGTHSTKTRGEVSGGGKKPYRQKGSGRARQGSTRAPQFTGGGTVHGPKPRDYSQ).

The protein belongs to the universal ribosomal protein uL4 family. Part of the 50S ribosomal subunit.

Its function is as follows. One of the primary rRNA binding proteins, this protein initially binds near the 5'-end of the 23S rRNA. It is important during the early stages of 50S assembly. It makes multiple contacts with different domains of the 23S rRNA in the assembled 50S subunit and ribosome. Functionally, forms part of the polypeptide exit tunnel. This is Large ribosomal subunit protein uL4 from Mycolicibacterium smegmatis (Mycobacterium smegmatis).